The following is a 98-amino-acid chain: NADH-ubiquinone oxidoreductase chain 4L (98 aa).

Transmembrane regions (helical) follow at residues M1–M21, S29–L49, and I61–V81.

This sequence belongs to the complex I subunit 4L family. In terms of assembly, core subunit of respiratory chain NADH dehydrogenase (Complex I) which is composed of 45 different subunits.

It is found in the mitochondrion inner membrane. It catalyses the reaction a ubiquinone + NADH + 5 H(+)(in) = a ubiquinol + NAD(+) + 4 H(+)(out). In terms of biological role, core subunit of the mitochondrial membrane respiratory chain NADH dehydrogenase (Complex I) which catalyzes electron transfer from NADH through the respiratory chain, using ubiquinone as an electron acceptor. Part of the enzyme membrane arm which is embedded in the lipid bilayer and involved in proton translocation. This chain is NADH-ubiquinone oxidoreductase chain 4L (MT-ND4L), found in Mogera wogura (Japanese mole).